Reading from the N-terminus, the 473-residue chain is Photosystem II CP43 reaction center protein (473 aa).

Positions 1–14 (MKTLYSLRRFSHVE) are excised as a propeptide. An N-acetylthreonine modification is found at Thr-15. Thr-15 is subject to Phosphothreonine. The next 5 membrane-spanning stretches (helical) occupy residues 69-93 (LFEV…PHLA), 134-155 (LLGP…KDRN), 178-200 (KALY…RKIT), 255-275 (KPFA…LSYS), and 291-312 (WFNN…ASQA). Residue Glu-367 coordinates [CaMn4O5] cluster. The chain crosses the membrane as a helical span at residues 447–471 (RARAAAAGFEKGIDRDFEPVLSMTP).

It belongs to the PsbB/PsbC family. PsbC subfamily. In terms of assembly, PSII is composed of 1 copy each of membrane proteins PsbA, PsbB, PsbC, PsbD, PsbE, PsbF, PsbH, PsbI, PsbJ, PsbK, PsbL, PsbM, PsbT, PsbX, PsbY, PsbZ, Psb30/Ycf12, at least 3 peripheral proteins of the oxygen-evolving complex and a large number of cofactors. It forms dimeric complexes. Binds multiple chlorophylls and provides some of the ligands for the Ca-4Mn-5O cluster of the oxygen-evolving complex. It may also provide a ligand for a Cl- that is required for oxygen evolution. PSII binds additional chlorophylls, carotenoids and specific lipids. serves as cofactor.

It localises to the plastid membrane. Its function is as follows. One of the components of the core complex of photosystem II (PSII). It binds chlorophyll and helps catalyze the primary light-induced photochemical processes of PSII. PSII is a light-driven water:plastoquinone oxidoreductase, using light energy to abstract electrons from H(2)O, generating O(2) and a proton gradient subsequently used for ATP formation. This is Photosystem II CP43 reaction center protein from Cuscuta gronovii (Common dodder).